The following is a 247-amino-acid chain: Small ribosomal subunit protein uS3 (247 aa).

Residues 38–106 (IRDFLSEGLD…QVQLNILEVK (69 aa)) enclose the KH type-2 domain. Residues 214–226 (SLMNARDERPSRG) are compositionally biased toward basic and acidic residues. The interval 214 to 247 (SLMNARDERPSRGRRERPRRGGARRQRAEQKQEG) is disordered. A compositionally biased stretch (basic residues) spans 227 to 238 (RRERPRRGGARR).

This sequence belongs to the universal ribosomal protein uS3 family. In terms of assembly, part of the 30S ribosomal subunit. Forms a tight complex with proteins S10 and S14.

Its function is as follows. Binds the lower part of the 30S subunit head. Binds mRNA in the 70S ribosome, positioning it for translation. The polypeptide is Small ribosomal subunit protein uS3 (Corynebacterium jeikeium (strain K411)).